The chain runs to 702 residues: Phosphatase and actin regulator 4 (702 aa).

Disordered regions lie at residues 1 to 37 (MEDP…KSKF), 72 to 194 (RKPR…SSGG), and 222 to 363 (NLSV…PFPA). The stretch at 63–88 (EVLERKISMRKPREELVKRGVLLEDP) is one RPEL 1 repeat. The segment covering 72 to 84 (RKPREELVKRGVL) has biased composition (basic and acidic residues). The span at 106–120 (GHTTPIGNARSSSPV) shows a compositional bias: polar residues. Phosphoserine is present on residues serine 116, serine 118, serine 131, and serine 147. Residues 147–156 (STGSQPNSEA) are compositionally biased toward polar residues. Positions 163–173 (VPKPPLLPPKR) are enriched in pro residues. Residues 233–250 (TLPAAPASTNTTATPSLT) show a composition bias toward low complexity. Serine 270 and serine 291 each carry phosphoserine. Residues 301–318 (PSTSVPTLESAAAITTKT) show a composition bias toward polar residues. Residues serine 342 and serine 344 each carry the phosphoserine modification. A compositionally biased stretch (pro residues) spans 342–362 (SPSPPLPTHIPPEPPRTPPFP). Threonine 358 bears the Phosphothreonine mark. A Phosphoserine modification is found at serine 427. Threonine 432 is subject to Phosphothreonine. A phosphoserine mark is found at serine 443, serine 453, and serine 464. The tract at residues 469–536 (IEMLKVPDDE…EEDEDESYQS (68 aa)) is disordered. Residues 484 to 497 (TCPSTFSEEMTPTS) show a composition bias toward polar residues. Acidic residues predominate over residues 508 to 518 (EEEEKESDSDS). A phosphoserine mark is found at serine 514, serine 516, serine 557, and serine 590. 2 RPEL repeats span residues 583–608 (NTLI…QPKN) and 621–646 (RRLT…RFNE). Positions 592–615 (RPTPEELEQRNILQPKNEADRQAE) are disordered. Serine 628 carries the phosphoserine modification.

The protein belongs to the phosphatase and actin regulator family. As to quaternary structure, binds PPP1CA and actin.

It is found in the cytoplasm. It localises to the cell projection. The protein localises to the lamellipodium. In terms of biological role, regulator of protein phosphatase 1 (PP1) required for neural tube and optic fissure closure, and enteric neural crest cell (ENCCs) migration during development. Acts as an activator of PP1 by interacting with PPP1CA and preventing phosphorylation of PPP1CA at 'Thr-320'. During neural tube closure, localizes to the ventral neural tube and activates PP1, leading to down-regulate cell proliferation within cranial neural tissue and the neural retina. Also acts as a regulator of migration of enteric neural crest cells (ENCCs) by activating PP1, leading to dephosphorylation and subsequent activation of cofilin (COF1 or COF2) and repression of the integrin signaling through the RHO/ROCK pathway. The chain is Phosphatase and actin regulator 4 (PHACTR4) from Homo sapiens (Human).